Reading from the N-terminus, the 254-residue chain is Imidazole glycerol phosphate synthase subunit HisF (254 aa).

Catalysis depends on residues D11 and D130.

This sequence belongs to the HisA/HisF family. As to quaternary structure, heterodimer of HisH and HisF.

Its subcellular location is the cytoplasm. The enzyme catalyses 5-[(5-phospho-1-deoxy-D-ribulos-1-ylimino)methylamino]-1-(5-phospho-beta-D-ribosyl)imidazole-4-carboxamide + L-glutamine = D-erythro-1-(imidazol-4-yl)glycerol 3-phosphate + 5-amino-1-(5-phospho-beta-D-ribosyl)imidazole-4-carboxamide + L-glutamate + H(+). The protein operates within amino-acid biosynthesis; L-histidine biosynthesis; L-histidine from 5-phospho-alpha-D-ribose 1-diphosphate: step 5/9. IGPS catalyzes the conversion of PRFAR and glutamine to IGP, AICAR and glutamate. The HisF subunit catalyzes the cyclization activity that produces IGP and AICAR from PRFAR using the ammonia provided by the HisH subunit. This chain is Imidazole glycerol phosphate synthase subunit HisF, found in Staphylococcus carnosus (strain TM300).